We begin with the raw amino-acid sequence, 492 residues long: Catalase isozyme 1 (492 aa).

Active-site residues include histidine 65 and asparagine 138. Tyrosine 348 serves as a coordination point for heme.

Belongs to the catalase family. As to quaternary structure, homotetramer. It depends on heme as a cofactor.

Its subcellular location is the peroxisome. It carries out the reaction 2 H2O2 = O2 + 2 H2O. Functionally, occurs in almost all aerobically respiring organisms and serves to protect cells from the toxic effects of hydrogen peroxide. The sequence is that of Catalase isozyme 1 (CAT1) from Solanum lycopersicum (Tomato).